The sequence spans 111 residues: MSDTLNRLAEVLEERKHAAPDSSYVASLYHKGLNKILEKLGEESVETIIAAKDAEHSKDYSDVIYETADLWFHSLVMLSALGQHPQAVLDELERRFGLSGHDEKAARQPSA.

Belongs to the PRA-PH family.

The protein localises to the cytoplasm. It catalyses the reaction 1-(5-phospho-beta-D-ribosyl)-ATP + H2O = 1-(5-phospho-beta-D-ribosyl)-5'-AMP + diphosphate + H(+). It participates in amino-acid biosynthesis; L-histidine biosynthesis; L-histidine from 5-phospho-alpha-D-ribose 1-diphosphate: step 2/9. The sequence is that of Phosphoribosyl-ATP pyrophosphatase from Pseudomonas putida (strain GB-1).